We begin with the raw amino-acid sequence, 206 residues long: MLVLPIIGLTGGIASGKSTVSRILQELGFAIIDADRIARDILTPGHPAYQKVIDTFGKNILTEDGQIDRAKLGKIVFGNREKLLVLNSITHPEVLKEIRKKIKELTSSGIDWIVLDIPLLFEAKMTSLVDEIWVVYVPEEEQLKRLMARNGFSRDEALARIRAQMPLEEKVKLADVVIDNSGSIESTREQILTILQKWKWKDWSKK.

The region spanning 6-206 (IIGLTGGIAS…KWKWKDWSKK (201 aa)) is the DPCK domain. 14-19 (ASGKST) provides a ligand contact to ATP.

This sequence belongs to the CoaE family.

The protein localises to the cytoplasm. It carries out the reaction 3'-dephospho-CoA + ATP = ADP + CoA + H(+). Its pathway is cofactor biosynthesis; coenzyme A biosynthesis; CoA from (R)-pantothenate: step 5/5. Functionally, catalyzes the phosphorylation of the 3'-hydroxyl group of dephosphocoenzyme A to form coenzyme A. This Carboxydothermus hydrogenoformans (strain ATCC BAA-161 / DSM 6008 / Z-2901) protein is Dephospho-CoA kinase.